The primary structure comprises 259 residues: Ribosomal RNA small subunit methyltransferase A (259 aa).

The S-adenosyl-L-methionine site is built by Asn-13, Leu-15, Gly-40, Glu-61, Asp-85, and Asn-103.

Belongs to the class I-like SAM-binding methyltransferase superfamily. rRNA adenine N(6)-methyltransferase family. RsmA subfamily.

Its subcellular location is the cytoplasm. The enzyme catalyses adenosine(1518)/adenosine(1519) in 16S rRNA + 4 S-adenosyl-L-methionine = N(6)-dimethyladenosine(1518)/N(6)-dimethyladenosine(1519) in 16S rRNA + 4 S-adenosyl-L-homocysteine + 4 H(+). In terms of biological role, specifically dimethylates two adjacent adenosines (A1518 and A1519) in the loop of a conserved hairpin near the 3'-end of 16S rRNA in the 30S particle. May play a critical role in biogenesis of 30S subunits. In Neisseria meningitidis serogroup C / serotype 2a (strain ATCC 700532 / DSM 15464 / FAM18), this protein is Ribosomal RNA small subunit methyltransferase A.